The chain runs to 560 residues: 2-succinyl-5-enolpyruvyl-6-hydroxy-3-cyclohexene-1-carboxylate synthase (560 aa).

It belongs to the TPP enzyme family. MenD subfamily. In terms of assembly, homodimer. It depends on Mg(2+) as a cofactor. Mn(2+) serves as cofactor. Thiamine diphosphate is required as a cofactor.

The catalysed reaction is isochorismate + 2-oxoglutarate + H(+) = 5-enolpyruvoyl-6-hydroxy-2-succinyl-cyclohex-3-ene-1-carboxylate + CO2. It participates in quinol/quinone metabolism; 1,4-dihydroxy-2-naphthoate biosynthesis; 1,4-dihydroxy-2-naphthoate from chorismate: step 2/7. Its pathway is quinol/quinone metabolism; menaquinone biosynthesis. Its function is as follows. Catalyzes the thiamine diphosphate-dependent decarboxylation of 2-oxoglutarate and the subsequent addition of the resulting succinic semialdehyde-thiamine pyrophosphate anion to isochorismate to yield 2-succinyl-5-enolpyruvyl-6-hydroxy-3-cyclohexene-1-carboxylate (SEPHCHC). In Pectobacterium atrosepticum (strain SCRI 1043 / ATCC BAA-672) (Erwinia carotovora subsp. atroseptica), this protein is 2-succinyl-5-enolpyruvyl-6-hydroxy-3-cyclohexene-1-carboxylate synthase.